The primary structure comprises 194 residues: NADH-quinone oxidoreductase subunit B (194 aa).

4 residues coordinate [4Fe-4S] cluster: C73, C74, C138, and C168.

The protein belongs to the complex I 20 kDa subunit family. As to quaternary structure, NDH-1 is composed of 14 different subunits. Subunits NuoB, C, D, E, F, and G constitute the peripheral sector of the complex. [4Fe-4S] cluster is required as a cofactor.

It localises to the cell inner membrane. The catalysed reaction is a quinone + NADH + 5 H(+)(in) = a quinol + NAD(+) + 4 H(+)(out). NDH-1 shuttles electrons from NADH, via FMN and iron-sulfur (Fe-S) centers, to quinones in the respiratory chain. The immediate electron acceptor for the enzyme in this species is believed to be ubiquinone. Couples the redox reaction to proton translocation (for every two electrons transferred, four hydrogen ions are translocated across the cytoplasmic membrane), and thus conserves the redox energy in a proton gradient. The protein is NADH-quinone oxidoreductase subunit B of Rhizobium leguminosarum bv. trifolii (strain WSM2304).